The primary structure comprises 140 residues: Small ribosomal subunit protein uS12 (140 aa).

2 disordered regions span residues 1-20 (MPTI…VKSD) and 35-55 (QTNV…TMTP). Residue Asp102 is modified to 3-methylthioaspartic acid. Positions 121–140 (DGRMQGRSKYGTKRPKAAKK) are disordered. Residues 130-140 (YGTKRPKAAKK) are compositionally biased toward basic residues.

It belongs to the universal ribosomal protein uS12 family. In terms of assembly, part of the 30S ribosomal subunit. Contacts proteins S8 and S17. May interact with IF1 in the 30S initiation complex.

With S4 and S5 plays an important role in translational accuracy. Functionally, interacts with and stabilizes bases of the 16S rRNA that are involved in tRNA selection in the A site and with the mRNA backbone. Located at the interface of the 30S and 50S subunits, it traverses the body of the 30S subunit contacting proteins on the other side and probably holding the rRNA structure together. The combined cluster of proteins S8, S12 and S17 appears to hold together the shoulder and platform of the 30S subunit. The polypeptide is Small ribosomal subunit protein uS12 (Exiguobacterium sp. (strain ATCC BAA-1283 / AT1b)).